A 290-amino-acid polypeptide reads, in one-letter code: Acetyl-coenzyme A carboxylase carboxyl transferase subunit beta (290 aa).

The CoA carboxyltransferase N-terminal domain maps to 28–290; that stretch reads VMTKCPQCKK…KGGEEGWWRN (263 aa). Zn(2+) contacts are provided by Cys-32, Cys-35, Cys-51, and Cys-54. A C4-type zinc finger spans residues 32-54; it reads CPQCKKIMYTKELIKNLRVCLSC.

The protein belongs to the AccD/PCCB family. Acetyl-CoA carboxylase is a heterohexamer composed of biotin carboxyl carrier protein (AccB), biotin carboxylase (AccC) and two subunits each of ACCase subunit alpha (AccA) and ACCase subunit beta (AccD). Zn(2+) is required as a cofactor.

Its subcellular location is the cytoplasm. The enzyme catalyses N(6)-carboxybiotinyl-L-lysyl-[protein] + acetyl-CoA = N(6)-biotinyl-L-lysyl-[protein] + malonyl-CoA. It participates in lipid metabolism; malonyl-CoA biosynthesis; malonyl-CoA from acetyl-CoA: step 1/1. Its function is as follows. Component of the acetyl coenzyme A carboxylase (ACC) complex. Biotin carboxylase (BC) catalyzes the carboxylation of biotin on its carrier protein (BCCP) and then the CO(2) group is transferred by the transcarboxylase to acetyl-CoA to form malonyl-CoA. The polypeptide is Acetyl-coenzyme A carboxylase carboxyl transferase subunit beta (Geobacillus kaustophilus (strain HTA426)).